The primary structure comprises 241 residues: 2-C-methyl-D-erythritol 4-phosphate cytidylyltransferase (241 aa).

The protein belongs to the IspD/TarI cytidylyltransferase family. IspD subfamily. In terms of assembly, homodimer.

It catalyses the reaction 2-C-methyl-D-erythritol 4-phosphate + CTP + H(+) = 4-CDP-2-C-methyl-D-erythritol + diphosphate. The protein operates within isoprenoid biosynthesis; isopentenyl diphosphate biosynthesis via DXP pathway; isopentenyl diphosphate from 1-deoxy-D-xylulose 5-phosphate: step 2/6. In terms of biological role, catalyzes the formation of 4-diphosphocytidyl-2-C-methyl-D-erythritol from CTP and 2-C-methyl-D-erythritol 4-phosphate (MEP). This Yersinia pseudotuberculosis serotype IB (strain PB1/+) protein is 2-C-methyl-D-erythritol 4-phosphate cytidylyltransferase.